Consider the following 138-residue polypeptide: Putative pre-16S rRNA nuclease (138 aa).

The protein belongs to the YqgF nuclease family.

The protein localises to the cytoplasm. Its function is as follows. Could be a nuclease involved in processing of the 5'-end of pre-16S rRNA. The protein is Putative pre-16S rRNA nuclease of Listeria monocytogenes serovar 1/2a (strain ATCC BAA-679 / EGD-e).